The primary structure comprises 388 residues: Succinate--CoA ligase [ADP-forming] subunit beta (388 aa).

The ATP-grasp domain maps to 9–244; sequence KEIFRSMGVA…LEEEDPKEIE (236 aa). Residues Lys-46, 53 to 55, Glu-99, Cys-102, and Glu-107 each bind ATP; that span reads GRG. Mg(2+) contacts are provided by Asn-199 and Asp-213. Substrate-binding positions include Asn-264 and 321-323; that span reads GIM.

This sequence belongs to the succinate/malate CoA ligase beta subunit family. In terms of assembly, heterotetramer of two alpha and two beta subunits. Requires Mg(2+) as cofactor.

The catalysed reaction is succinate + ATP + CoA = succinyl-CoA + ADP + phosphate. It catalyses the reaction GTP + succinate + CoA = succinyl-CoA + GDP + phosphate. It participates in carbohydrate metabolism; tricarboxylic acid cycle; succinate from succinyl-CoA (ligase route): step 1/1. In terms of biological role, succinyl-CoA synthetase functions in the citric acid cycle (TCA), coupling the hydrolysis of succinyl-CoA to the synthesis of either ATP or GTP and thus represents the only step of substrate-level phosphorylation in the TCA. The beta subunit provides nucleotide specificity of the enzyme and binds the substrate succinate, while the binding sites for coenzyme A and phosphate are found in the alpha subunit. The sequence is that of Succinate--CoA ligase [ADP-forming] subunit beta from Staphylococcus aureus (strain MRSA252).